We begin with the raw amino-acid sequence, 549 residues long: Urocanate hydratase (549 aa).

NAD(+) contacts are provided by residues glycine 46–glycine 47, glutamine 124, glycine 170–glycine 172, glutamate 190, arginine 195, asparagine 236–alanine 237, glutamine 257–histidine 261, tyrosine 267–valine 268, and tyrosine 316. Cysteine 404 is a catalytic residue. Glycine 486 lines the NAD(+) pocket.

This sequence belongs to the urocanase family. NAD(+) is required as a cofactor.

The protein localises to the cytoplasm. It catalyses the reaction 4-imidazolone-5-propanoate = trans-urocanate + H2O. It participates in amino-acid degradation; L-histidine degradation into L-glutamate; N-formimidoyl-L-glutamate from L-histidine: step 2/3. Catalyzes the conversion of urocanate to 4-imidazolone-5-propionate. The chain is Urocanate hydratase from Natranaerobius thermophilus (strain ATCC BAA-1301 / DSM 18059 / JW/NM-WN-LF).